A 59-amino-acid chain; its full sequence is MKILSILLIALVICSISICTEAFGLIDVKCSASRECWVACKKVTGSGQGKCQNNQCRCY.

An N-terminal signal peptide occupies residues 1–22; it reads MKILSILLIALVICSISICTEA. Disulfide bonds link Cys30–Cys51, Cys36–Cys56, and Cys40–Cys58.

The protein belongs to the short scorpion toxin superfamily. Potassium channel inhibitor family. Alpha-KTx 16 subfamily. Expressed by the venom gland.

The protein localises to the secreted. In terms of biological role, may play a role in blocking voltage-gated potassium channels Kv1.2/KCNA2, and Kv1.3/KCNA3. Blocks the voltage-gated potassium channel Kv1.3/KCNA3, with an IC(50) of 118.3 +-55.8 nM. The polypeptide is Potassium channel toxin alpha-KTx 16.7 (Mesobuthus gibbosus (Mediterranean checkered scorpion)).